A 159-amino-acid polypeptide reads, in one-letter code: Kojic acid related protein 6 (159 aa).

Functionally, negatively regulates mycelium growth and conidial formation and is required for stress tolerance. Plays a role in kojic acid synthesis in coordination with kojA, kojR and kojT where it acts upstream of kojA. The protein is Kojic acid related protein 6 of Aspergillus oryzae (strain ATCC 42149 / RIB 40) (Yellow koji mold).